We begin with the raw amino-acid sequence, 148 residues long: ATP synthase epsilon chain (148 aa).

Belongs to the ATPase epsilon chain family. F-type ATPases have 2 components, CF(1) - the catalytic core - and CF(0) - the membrane proton channel. CF(1) has five subunits: alpha(3), beta(3), gamma(1), delta(1), epsilon(1). CF(0) has three main subunits: a, b and c.

The protein resides in the cell membrane. Its function is as follows. Produces ATP from ADP in the presence of a proton gradient across the membrane. The chain is ATP synthase epsilon chain from Streptococcus thermophilus (strain ATCC BAA-491 / LMD-9).